Reading from the N-terminus, the 636-residue chain is p-hydroxybenzoate-m-hydroxylase (636 aa).

FAD-binding positions include 11–40 (DIVI…HIDN), 242–244 (RLY), Y290, and D311. The helical transmembrane segment at 12–33 (IVIVGAGPVGILLSLCMSRWGY) threads the bilayer. N573 carries an N-linked (GlcNAc...) asparagine glycan.

It belongs to the PheA/TfdB FAD monooxygenase family. FAD is required as a cofactor.

The protein localises to the membrane. The enzyme catalyses 4-hydroxybenzoate + NADH + O2 + H(+) = 3,4-dihydroxybenzoate + NAD(+) + H2O. The catalysed reaction is 4-hydroxybenzoate + NADPH + O2 + H(+) = 3,4-dihydroxybenzoate + NADP(+) + H2O. In terms of biological role, FAD-dependent monooxygenase; part of the benzoic acid degradation pathway also known as the protocatechuic acid pathway. Benzoic acid debradation begins with the conversion of benzoic acid into 4-hydroxybenzoic acid through hydroxylation by the benzoate-4-monooxygenase bphA, and its partner NADPH-cytochrome P450 reductase cprA which act as a mediator in electron donation from NADPH. 4-Hydroxybenzoic acid is then converted into 3,4-dihydroxybenzoic acid (also called protocatechuic acid) by the p-hydroxybenzoate-m-hydroxylase phhA. Protocatechuic acid is converted into 3-carboxy-cis,cis-muconic acid by the intradiol ring-cleavage dioxygenase prcA, which is further metabolized through the 3-oxoadipate pathway to finally enter the tricarboxylic acid cycle (TCA). In Emericella nidulans (strain FGSC A4 / ATCC 38163 / CBS 112.46 / NRRL 194 / M139) (Aspergillus nidulans), this protein is p-hydroxybenzoate-m-hydroxylase.